Here is a 153-residue protein sequence, read N- to C-terminus: uncharacterized protein (153 aa).

An N-terminal signal peptide occupies residues 1-22 (MKLLKKGTTVLFVMIMAVMLVA). A lipid anchor (N-palmitoyl cysteine) is attached at cysteine 23. Cysteine 23 carries the S-diacylglycerol cysteine lipid modification. The segment at 121–153 (LPGMASTGDVSKGISMKESEKMLKSQGFKEVEK) is disordered. Residues 135 to 153 (SMKESEKMLKSQGFKEVEK) show a composition bias toward basic and acidic residues.

The protein to E.coli YehR.

It localises to the cell membrane. This is an uncharacterized protein from Listeria innocua serovar 6a (strain ATCC BAA-680 / CLIP 11262).